The primary structure comprises 369 residues: 2-aminoethylphosphonate--pyruvate transaminase (369 aa).

K193 carries the post-translational modification N6-(pyridoxal phosphate)lysine.

Belongs to the class-V pyridoxal-phosphate-dependent aminotransferase family. PhnW subfamily. As to quaternary structure, homodimer. Requires pyridoxal 5'-phosphate as cofactor.

The enzyme catalyses (2-aminoethyl)phosphonate + pyruvate = phosphonoacetaldehyde + L-alanine. Its function is as follows. Involved in phosphonate degradation. This Burkholderia mallei (strain NCTC 10247) protein is 2-aminoethylphosphonate--pyruvate transaminase.